A 318-amino-acid polypeptide reads, in one-letter code: MANEMEFEKPILELKSKIADLKEYNETSDVDLTNEIEKLEKRLAKLEASIYSNMTAWDKFQVARHPERPTTLDYISLLFEDFMELHGDRTFGDDAAIVGGIATFKGTPVTVIGHQRGKDTKDNLHRNFGMPHPEGFRKALRLMKQADKFGRPIICFIDTKGAYPGRAAEERGQSEAIARNLYEMSDMKVPIISIVIGEGGSGGALALGLGNQIFMLENAVFSVISPEGAAAILWKDASLAKKAAESMRITAGDLYELGITDGIIPEVKGGAHRDLAAQAEEINKTITKSLHALMAFSEEQLIEQRYDKFKKIGVYETL.

The region spanning 38–292 (KLEKRLAKLE…NKTITKSLHA (255 aa)) is the CoA carboxyltransferase C-terminal domain.

It belongs to the AccA family. As to quaternary structure, acetyl-CoA carboxylase is a heterohexamer composed of biotin carboxyl carrier protein (AccB), biotin carboxylase (AccC) and two subunits each of ACCase subunit alpha (AccA) and ACCase subunit beta (AccD).

It is found in the cytoplasm. The enzyme catalyses N(6)-carboxybiotinyl-L-lysyl-[protein] + acetyl-CoA = N(6)-biotinyl-L-lysyl-[protein] + malonyl-CoA. It functions in the pathway lipid metabolism; malonyl-CoA biosynthesis; malonyl-CoA from acetyl-CoA: step 1/1. Component of the acetyl coenzyme A carboxylase (ACC) complex. First, biotin carboxylase catalyzes the carboxylation of biotin on its carrier protein (BCCP) and then the CO(2) group is transferred by the carboxyltransferase to acetyl-CoA to form malonyl-CoA. The polypeptide is Acetyl-coenzyme A carboxylase carboxyl transferase subunit alpha (Listeria innocua serovar 6a (strain ATCC BAA-680 / CLIP 11262)).